A 70-amino-acid chain; its full sequence is Ranatuerin-2SN1 (70 aa).

The first 22 residues, 1–22 (MFTLKKSLLLIFFLGTISLSLC), serve as a signal peptide directing secretion. Positions 23–40 (EKERDADDDEVEVIKQEE) are cleaved as a propeptide — removed in mature form. Cysteines 65 and 70 form a disulfide.

The protein belongs to the frog skin active peptide (FSAP) family. Ranatuerin subfamily. Expressed by the skin glands.

It localises to the secreted. Functionally, antimicrobial peptide. Weakly active against P.faecalis X29. Not active against fungi. Shows very weak hemolytic activity against human erythrocytes. The chain is Ranatuerin-2SN1 from Sylvirana spinulosa (Fine-spined frog).